A 444-amino-acid polypeptide reads, in one-letter code: Phosphoglucosamine mutase (444 aa).

S102 serves as the catalytic Phosphoserine intermediate. The Mg(2+) site is built by S102, D239, D241, and D243. S102 bears the Phosphoserine mark.

It belongs to the phosphohexose mutase family. It depends on Mg(2+) as a cofactor. In terms of processing, activated by phosphorylation.

It catalyses the reaction alpha-D-glucosamine 1-phosphate = D-glucosamine 6-phosphate. In terms of biological role, catalyzes the conversion of glucosamine-6-phosphate to glucosamine-1-phosphate. The chain is Phosphoglucosamine mutase from Mycolicibacterium paratuberculosis (strain ATCC BAA-968 / K-10) (Mycobacterium paratuberculosis).